Reading from the N-terminus, the 315-residue chain is MEVIKITPRGYCYGVVDAMVIARNAALNPTLPRPIYILGMIVHNKHVTDAFEEEGIITLDGPNRLEILENIDHGTVIFTAHGVSPEVKQRAREKGLVTIDATCPDVTKTHDLIREKVENGYEVIYIGKKGHPEPEGAIGVAPHAVHLIETPEDVEQLDIQSKRIIVTNQTTMSQWDVAHIMEKVKEKYPHVEMHREICLATQVRQEAVAEQAKEADVTIVVGDPRSNNSNRLAQVSEEIAGTKAYRVSDVTEIDIEWIKDAKKVAVTAGASTPTPITKEVIDFLEQFDPNNPETWKRERKVPLTKILPKVKKRGE.

Position 12 (Cys12) interacts with [4Fe-4S] cluster. 2 residues coordinate (2E)-4-hydroxy-3-methylbut-2-enyl diphosphate: His43 and His81. Positions 43 and 81 each coordinate dimethylallyl diphosphate. Isopentenyl diphosphate is bound by residues His43 and His81. Residue Cys103 coordinates [4Fe-4S] cluster. His131 lines the (2E)-4-hydroxy-3-methylbut-2-enyl diphosphate pocket. Residue His131 participates in dimethylallyl diphosphate binding. His131 lines the isopentenyl diphosphate pocket. Glu133 acts as the Proton donor in catalysis. Residue Thr170 participates in (2E)-4-hydroxy-3-methylbut-2-enyl diphosphate binding. A [4Fe-4S] cluster-binding site is contributed by Cys198. Positions 226, 228, and 271 each coordinate (2E)-4-hydroxy-3-methylbut-2-enyl diphosphate. Dimethylallyl diphosphate contacts are provided by Ser226, Asn228, and Ser271. Isopentenyl diphosphate is bound by residues Ser226, Asn228, and Ser271.

The protein belongs to the IspH family. [4Fe-4S] cluster serves as cofactor.

It carries out the reaction isopentenyl diphosphate + 2 oxidized [2Fe-2S]-[ferredoxin] + H2O = (2E)-4-hydroxy-3-methylbut-2-enyl diphosphate + 2 reduced [2Fe-2S]-[ferredoxin] + 2 H(+). The catalysed reaction is dimethylallyl diphosphate + 2 oxidized [2Fe-2S]-[ferredoxin] + H2O = (2E)-4-hydroxy-3-methylbut-2-enyl diphosphate + 2 reduced [2Fe-2S]-[ferredoxin] + 2 H(+). Its pathway is isoprenoid biosynthesis; dimethylallyl diphosphate biosynthesis; dimethylallyl diphosphate from (2E)-4-hydroxy-3-methylbutenyl diphosphate: step 1/1. It participates in isoprenoid biosynthesis; isopentenyl diphosphate biosynthesis via DXP pathway; isopentenyl diphosphate from 1-deoxy-D-xylulose 5-phosphate: step 6/6. In terms of biological role, catalyzes the conversion of 1-hydroxy-2-methyl-2-(E)-butenyl 4-diphosphate (HMBPP) into a mixture of isopentenyl diphosphate (IPP) and dimethylallyl diphosphate (DMAPP). Acts in the terminal step of the DOXP/MEP pathway for isoprenoid precursor biosynthesis. The polypeptide is 4-hydroxy-3-methylbut-2-enyl diphosphate reductase (Anoxybacillus flavithermus (strain DSM 21510 / WK1)).